A 68-amino-acid polypeptide reads, in one-letter code: Intracellular calcium channel modulator CCP-Ts (68 aa).

The first 23 residues, 1–23, serve as a signal peptide directing secretion; it reads MNPKLLIVIGLLLATGVCSFAKA. 3 cysteine pairs are disulfide-bonded: cysteine 33–cysteine 47, cysteine 40–cysteine 53, and cysteine 46–cysteine 62.

Belongs to the scorpion calcin-like family. As to expression, expressed by the venom gland. In intravenously injected mice, the labeled toxin has preference for heart, liver and lungs.

Its subcellular location is the secreted. It is found in the nucleus. Cell penetrating peptide (CPP) that increases intracellular calcium release through the activation of nuclear inositol 1,4,5-trisphosphate receptors (ITPR) of cardiomyocytes, thereby causing an increase in the contraction frequency of these cells. In vivo, this toxin is not lethal to mice, hovewer anti-CPP serum reduces venom lethality, suggesting that this toxin is lethal when it acts in synergy with other venom components. In Tityus serrulatus (Brazilian scorpion), this protein is Intracellular calcium channel modulator CCP-Ts.